The primary structure comprises 591 residues: Aspartate--tRNA(Asp/Asn) ligase (591 aa).

An L-aspartate-binding site is contributed by glutamate 174. Positions 198 to 201 are aspartate; the sequence is QLFK. Residue arginine 220 coordinates L-aspartate. Residues 220 to 222 and glutamine 229 each bind ATP; that span reads RDE. Histidine 450 contacts L-aspartate. Position 483 (glutamate 483) interacts with ATP. Arginine 490 serves as a coordination point for L-aspartate. 535-538 lines the ATP pocket; it reads GLDR.

Belongs to the class-II aminoacyl-tRNA synthetase family. Type 1 subfamily. In terms of assembly, homodimer.

It is found in the cytoplasm. The catalysed reaction is tRNA(Asx) + L-aspartate + ATP = L-aspartyl-tRNA(Asx) + AMP + diphosphate. Functionally, aspartyl-tRNA synthetase with relaxed tRNA specificity since it is able to aspartylate not only its cognate tRNA(Asp) but also tRNA(Asn). Reaction proceeds in two steps: L-aspartate is first activated by ATP to form Asp-AMP and then transferred to the acceptor end of tRNA(Asp/Asn). In Pseudomonas syringae pv. syringae (strain B728a), this protein is Aspartate--tRNA(Asp/Asn) ligase.